The sequence spans 309 residues: L-lactate dehydrogenase 2 (309 aa).

NAD(+) contacts are provided by residues Val16, Asp37, Tyr67, and 81 to 82 (GV). Residue Arg90 participates in substrate binding. Ser103 contacts NAD(+). Position 122–125 (122–125 (NPVD)) interacts with substrate. Position 145 (Thr145) interacts with NAD(+). 150–153 (DTAR) serves as a coordination point for substrate. Residue His177 is the Proton acceptor of the active site. Thr227 serves as a coordination point for substrate.

The protein belongs to the LDH/MDH superfamily. LDH family. Homotetramer.

The protein localises to the cytoplasm. It carries out the reaction (S)-lactate + NAD(+) = pyruvate + NADH + H(+). The protein operates within fermentation; pyruvate fermentation to lactate; (S)-lactate from pyruvate: step 1/1. Its function is as follows. Catalyzes the conversion of lactate to pyruvate. The polypeptide is L-lactate dehydrogenase 2 (Lactiplantibacillus plantarum (strain ATCC BAA-793 / NCIMB 8826 / WCFS1) (Lactobacillus plantarum)).